Reading from the N-terminus, the 258-residue chain is MLSPCLAAPATECRDPADAPAAPARHTGPARPRKRRPRNWKPHLPRERLLERGPAALTDAELIALLLGTGGGGRDVFASARALLARFGDSLRDMLDAEPDVFATHPGIGTARSAVLIAVTEIVRRALVEKARERLQIDSPGAVEDYLRLRIGTRPHEVFVTLYLDARHGLIDVEESARGSLTRMAVYPREIVRRALVLNAAALIIAHNHPSGAVQPSAEDRRLTRVLHEALALIDAKLLDHVVVGTADTFSFARAGWL.

Residues 1 to 43 (MLSPCLAAPATECRDPADAPAAPARHTGPARPRKRRPRNWKPH) are disordered. Residues 31–43 (RPRKRRPRNWKPH) are compositionally biased toward basic residues. The MPN domain maps to 136–258 (QIDSPGAVED…TFSFARAGWL (123 aa)). The Zn(2+) site is built by His207, His209, and Asp220. Positions 207–220 (HNHPSGAVQPSAED) match the JAMM motif motif.

It belongs to the UPF0758 family.

This is UPF0758 protein Bamb_2548 from Burkholderia ambifaria (strain ATCC BAA-244 / DSM 16087 / CCUG 44356 / LMG 19182 / AMMD) (Burkholderia cepacia (strain AMMD)).